The chain runs to 363 residues: NAD(P)H-quinone oxidoreductase subunit 1, chloroplastic (363 aa).

The next 6 helical transmembrane spans lie at 28–48, 98–118, 129–149, 253–273, 300–320, and 336–356; these read WVFV…LAIV, FSFG…VIPF, IGVF…LMSG, FGLF…FVTV, VFVT…FIFV, and LLNL…LLTT.

This sequence belongs to the complex I subunit 1 family. As to quaternary structure, NDH is composed of at least 16 different subunits, 5 of which are encoded in the nucleus.

It is found in the plastid. It localises to the chloroplast thylakoid membrane. The catalysed reaction is a plastoquinone + NADH + (n+1) H(+)(in) = a plastoquinol + NAD(+) + n H(+)(out). It catalyses the reaction a plastoquinone + NADPH + (n+1) H(+)(in) = a plastoquinol + NADP(+) + n H(+)(out). Functionally, NDH shuttles electrons from NAD(P)H:plastoquinone, via FMN and iron-sulfur (Fe-S) centers, to quinones in the photosynthetic chain and possibly in a chloroplast respiratory chain. The immediate electron acceptor for the enzyme in this species is believed to be plastoquinone. Couples the redox reaction to proton translocation, and thus conserves the redox energy in a proton gradient. This chain is NAD(P)H-quinone oxidoreductase subunit 1, chloroplastic, found in Phaseolus vulgaris (Kidney bean).